A 658-amino-acid chain; its full sequence is UvrABC system protein B (658 aa).

The Helicase ATP-binding domain occupies 26–413 (EGINSGKKKQ…SPEVIEQIIR (388 aa)). Residue 39-46 (GATGTGKT) participates in ATP binding. The Beta-hairpin motif lies at 92 to 115 (YYDYYQPEAYVPQTDTFIEKDAQI). Residues 430–596 (QIDDLLGEIQ…TIQKGVRDVI (167 aa)) form the Helicase C-terminal domain. The 36-residue stretch at 622–657 (EKTIAKMEAEMKEAAKALDFERAAELRDLLLELKAE) folds into the UVR domain.

This sequence belongs to the UvrB family. In terms of assembly, forms a heterotetramer with UvrA during the search for lesions. Interacts with UvrC in an incision complex.

It is found in the cytoplasm. Its function is as follows. The UvrABC repair system catalyzes the recognition and processing of DNA lesions. A damage recognition complex composed of 2 UvrA and 2 UvrB subunits scans DNA for abnormalities. Upon binding of the UvrA(2)B(2) complex to a putative damaged site, the DNA wraps around one UvrB monomer. DNA wrap is dependent on ATP binding by UvrB and probably causes local melting of the DNA helix, facilitating insertion of UvrB beta-hairpin between the DNA strands. Then UvrB probes one DNA strand for the presence of a lesion. If a lesion is found the UvrA subunits dissociate and the UvrB-DNA preincision complex is formed. This complex is subsequently bound by UvrC and the second UvrB is released. If no lesion is found, the DNA wraps around the other UvrB subunit that will check the other stand for damage. This chain is UvrABC system protein B, found in Bacillus cereus (strain ZK / E33L).